Consider the following 431-residue polypeptide: Serine--tRNA ligase (431 aa).

235 to 237 is a binding site for L-serine; sequence TAE. ATP-binding positions include 266 to 268 and V282; that span reads RRE. E289 contributes to the L-serine binding site. Residue 353 to 356 coordinates ATP; it reads EASS. S389 provides a ligand contact to L-serine.

Belongs to the class-II aminoacyl-tRNA synthetase family. Type-1 seryl-tRNA synthetase subfamily. In terms of assembly, homodimer. The tRNA molecule binds across the dimer.

Its subcellular location is the cytoplasm. The enzyme catalyses tRNA(Ser) + L-serine + ATP = L-seryl-tRNA(Ser) + AMP + diphosphate + H(+). It catalyses the reaction tRNA(Sec) + L-serine + ATP = L-seryl-tRNA(Sec) + AMP + diphosphate + H(+). It functions in the pathway aminoacyl-tRNA biosynthesis; selenocysteinyl-tRNA(Sec) biosynthesis; L-seryl-tRNA(Sec) from L-serine and tRNA(Sec): step 1/1. In terms of biological role, catalyzes the attachment of serine to tRNA(Ser). Is also able to aminoacylate tRNA(Sec) with serine, to form the misacylated tRNA L-seryl-tRNA(Sec), which will be further converted into selenocysteinyl-tRNA(Sec). The protein is Serine--tRNA ligase of Prosthecochloris aestuarii (strain DSM 271 / SK 413).